The sequence spans 751 residues: Cyanobacterial phytochrome B (751 aa).

C17 is an a tetrapyrrole binding site. Residues 22–511 (IHIPGLIQPH…RSAIIGIVLQ (490 aa)) are chromophore binding domain. The region spanning 152–320 (TTTEISQILA…MTSVEMSAKE (169 aa)) is the GAF domain. In terms of domain architecture, Histidine kinase spans 536–751 (IASHDLKEPL…STFYFTLQDV (216 aa)). A Phosphohistidine; by autocatalysis modification is found at H539.

The protein in the N-terminal section; belongs to the phytochrome family. Post-translationally, contains one covalently linked tetrapyrrole chromophore.

The catalysed reaction is ATP + protein L-histidine = ADP + protein N-phospho-L-histidine.. Functionally, photoreceptor which exists in two forms that are reversibly interconvertible by light: the R form that absorbs maximally in the red region of the spectrum and the FR form that absorbs maximally in the far-red region. The sequence is that of Cyanobacterial phytochrome B (bphB) from Nostoc sp. (strain PCC 7120 / SAG 25.82 / UTEX 2576).